A 179-amino-acid chain; its full sequence is UPF0227 protein Shewana3_2292 (179 aa).

This sequence belongs to the UPF0227 family.

The sequence is that of UPF0227 protein Shewana3_2292 from Shewanella sp. (strain ANA-3).